The sequence spans 270 residues: MSNSRENSVYLAKLAEQAERYEEMVENMKKVACSNDKLSVEERNLLSVAYKNIIGARRASWRIISSIEQKEESRGNTRQAALIKEYRKKIEDELSDICHDVLSVLEKHLIPAATTGESKVFYYKMKGDYYRYLAEFTVGEVCKEAADSSLEAYKAASDIAVAELPPTDPMRLGLALNFSVFYYEILDSPESACHLAKQVFDEAISELDSLSEESYKDSTLIMQLLRDNLTLWTSDAEYNQSAKEEAPAAAAASENEHPEPKESTTDTVKA.

A phosphoserine mark is found at serine 234 and serine 253. Residues 240–270 (QSAKEEAPAAAAASENEHPEPKESTTDTVKA) form a disordered region. Basic and acidic residues predominate over residues 254-270 (ENEHPEPKESTTDTVKA).

The protein belongs to the 14-3-3 family. Interacts with rad24. Interacts with byr2.

It localises to the cytoplasm. Acts in cell cycle and stress checkpoint signaling by sequestering signal transducers regulated by the checkpoints. Required for the DNA damage checkpoint that ensures that DNA damage is repaired before mitosis is attempted. Sequesters byr2 in the cytoplasm to prevent its translocation to the plasma membrane. The sequence is that of Checkpoint signal transducer rad25 from Schizosaccharomyces pombe (strain 972 / ATCC 24843) (Fission yeast).